The chain runs to 352 residues: tRNA-specific 2-thiouridylase MnmA (352 aa).

ATP is bound by residues 9 to 16 and Met35; that span reads ALSGGVDS. The active-site Nucleophile is Cys96. A disulfide bond links Cys96 and Cys192. An ATP-binding site is contributed by Gly120. An interaction with tRNA region spans residues 142 to 144; sequence KDQ. The active-site Cysteine persulfide intermediate is the Cys192. Residues 299-300 form an interaction with tRNA region; that stretch reads RY.

Belongs to the MnmA/TRMU family.

It localises to the cytoplasm. It carries out the reaction S-sulfanyl-L-cysteinyl-[protein] + uridine(34) in tRNA + AH2 + ATP = 2-thiouridine(34) in tRNA + L-cysteinyl-[protein] + A + AMP + diphosphate + H(+). Its function is as follows. Catalyzes the 2-thiolation of uridine at the wobble position (U34) of tRNA, leading to the formation of s(2)U34. This is tRNA-specific 2-thiouridylase MnmA from Acidithiobacillus ferrooxidans (strain ATCC 23270 / DSM 14882 / CIP 104768 / NCIMB 8455) (Ferrobacillus ferrooxidans (strain ATCC 23270)).